The following is a 181-amino-acid chain: Probable pyruvoyl-dependent arginine decarboxylase (181 aa).

At Ser-43 the chain carries Pyruvic acid (Ser).

Belongs to the PdaD family. The cofactor is pyruvate.

The catalysed reaction is L-arginine + H(+) = agmatine + CO2. This is Probable pyruvoyl-dependent arginine decarboxylase from Chlorobaculum tepidum (strain ATCC 49652 / DSM 12025 / NBRC 103806 / TLS) (Chlorobium tepidum).